Reading from the N-terminus, the 1113-residue chain is Potassium channel subfamily U member 1 (1113 aa).

The Extracellular segment spans residues 1 to 24 (MSQTLLDNLNKKELTETSCTIEIQ). A helical membrane pass occupies residues 25–45 (AAFILSSLATFFGGLIVLFIF). Over 46–101 (RIALKISRNWKTVKGPRGILELFSSRRIEVNPLRKLYFHGVFRERIEMLLSAQTIV) the chain is Cytoplasmic. A helical membrane pass occupies residues 102 to 122 (GQVLVILVFVLSIGSLVIYFI). Residues 123 to 137 (NSMDPVRKCSSYEDK) are Extracellular-facing. Residues 138 to 158 (IVHVDLSFNAFFSFYFGLRFW) form a helical membrane-spanning segment. Residues 159-165 (AAEDKIK) are Cytoplasmic-facing. The chain crosses the membrane as a helical span at residues 166–186 (FWLEMNSIVDIFTIPPTFISY). Over 187–188 (YL) the chain is Extracellular. Residues 189 to 209 (KSNWLGLRFLRALRLLELPKI) traverse the membrane as a helical; Voltage-sensor segment. Residues 210-226 (LQILQVIKTSNSVKLSK) lie on the Cytoplasmic side of the membrane. Residues 227 to 247 (LMSIVISTWFTAAGFLHLVEN) traverse the membrane as a helical segment. The Extracellular segment spans residues 248–259 (SGDPWLNGRNSQ). An intramembrane region (pore-forming) is located at residues 260–282 (TMSYFESIYLVTATMSTVGFGDV). Residues 283-290 (VAKTSLGR) lie on the Extracellular side of the membrane. Residues 291-311 (IFIVFFTLGSLILFANYIPEM) form a helical membrane-spanning segment. Residues 312 to 1113 (VELFSTRKKY…FDASDIDPGK (802 aa)) are Cytoplasmic-facing. RCK N-terminal domains are found at residues 331 to 473 (KKFI…DNII) and 710 to 881 (QNHI…DEAI). The segment covering 1047-1081 (ASIQDQDTTTNVTSMSQGSNFQGAQSALNEHSLSP) has biased composition (polar residues). A disordered region spans residues 1047–1091 (ASIQDQDTTTNVTSMSQGSNFQGAQSALNEHSLSPASAMGEKKSP).

Belongs to the potassium channel family. Calcium-activated (TC 1.A.1.3) subfamily. KCa1.1/KCNMA1 sub-subfamily. Homotetramer; which constitutes the activated potassium channel. Interacts with LRRC52; this interaction changes channel gating properties, such as shifting gating to more negative potentials at a given pH.

It is found in the cell membrane. It localises to the cell projection. Its subcellular location is the cilium. The protein resides in the flagellum membrane. It catalyses the reaction K(+)(in) = K(+)(out). Its activity is regulated as follows. Regulated by changes in cytosolic pH; activated by alkalization. Not activated by intracellular Ca(2+). VU0546110 acts as a selective inhibitor. The auxiliary subunit LRRC52 shifts the activation of KCNU1 to more negative potentials at a given pH. Functionally, testis-specific potassium channel activated by both intracellular pH and membrane voltage that mediates export of K(+). Represents the primary spermatozoan K(+) current. The channel underlies a pH-triggered membrane hyperpolarization during the process of sperm capacitation, as sperm encounter the alkaline environment near the ovum in the female reproductive tract, thereby playing an essential for male fertility. The chain is Potassium channel subfamily U member 1 (Kcnu1) from Rattus norvegicus (Rat).